A 290-amino-acid chain; its full sequence is GTPase Era (290 aa).

Residues Lys-2–Glu-169 enclose the Era-type G domain. Positions Gly-10–Ser-17 are G1. Position 10–17 (Gly-10–Ser-17) interacts with GTP. A G2 region spans residues Gln-36 to Asn-40. Residues Asp-57–Gly-60 form a G3 region. Residues Asp-57 to Phe-61 and Asn-119 to Asp-122 each bind GTP. A G4 region spans residues Asn-119 to Asp-122. Positions Ile-148–Ala-150 are G5. One can recognise a KH type-2 domain in the interval Leu-200–Lys-276.

It belongs to the TRAFAC class TrmE-Era-EngA-EngB-Septin-like GTPase superfamily. Era GTPase family. Monomer.

Its subcellular location is the cytoplasm. It is found in the cell inner membrane. Functionally, an essential GTPase that binds both GDP and GTP, with rapid nucleotide exchange. Plays a role in 16S rRNA processing and 30S ribosomal subunit biogenesis and possibly also in cell cycle regulation and energy metabolism. The protein is GTPase Era of Borrelia hermsii (strain HS1 / DAH).